A 444-amino-acid polypeptide reads, in one-letter code: C4-dicarboxylate transport protein (444 aa).

A run of 9 helical transmembrane segments spans residues 18–40 (FYSH…GHFY), 53–75 (AFIK…TGIA), 90–112 (AMLY…ANVV), 142–159 (IVGF…GAFA), 163–180 (ILQV…LAMV), 201–222 (LVAI…FTIG), 232–254 (LAML…LGAV), 327–349 (LFIA…LLVA), and 364–386 (FITL…ALIL).

Belongs to the dicarboxylate/amino acid:cation symporter (DAACS) (TC 2.A.23) family.

It is found in the cell inner membrane. In terms of biological role, responsible for the transport of dicarboxylates such as succinate, fumarate, and malate from the periplasm across the inner membrane. This transport system plays an important role in the energy supply of rhizobium-legume symbionts. The chain is C4-dicarboxylate transport protein (dctA) from Rhizobium leguminosarum.